A 316-amino-acid chain; its full sequence is Acetyl-coenzyme A carboxylase carboxyl transferase subunit alpha (316 aa).

In terms of domain architecture, CoA carboxyltransferase C-terminal spans 24–291 (NIKDKADIVD…KEALIQQLNE (268 aa)).

This sequence belongs to the AccA family. In terms of assembly, acetyl-CoA carboxylase is a heterohexamer composed of biotin carboxyl carrier protein (AccB), biotin carboxylase (AccC) and two subunits each of ACCase subunit alpha (AccA) and ACCase subunit beta (AccD).

Its subcellular location is the cytoplasm. The catalysed reaction is N(6)-carboxybiotinyl-L-lysyl-[protein] + acetyl-CoA = N(6)-biotinyl-L-lysyl-[protein] + malonyl-CoA. The protein operates within lipid metabolism; malonyl-CoA biosynthesis; malonyl-CoA from acetyl-CoA: step 1/1. Functionally, component of the acetyl coenzyme A carboxylase (ACC) complex. First, biotin carboxylase catalyzes the carboxylation of biotin on its carrier protein (BCCP) and then the CO(2) group is transferred by the carboxyltransferase to acetyl-CoA to form malonyl-CoA. This Ruthia magnifica subsp. Calyptogena magnifica protein is Acetyl-coenzyme A carboxylase carboxyl transferase subunit alpha.